A 28-amino-acid chain; its full sequence is DLARNLGLVDIDDEYDEDSDKEKPIFNV.

This sequence belongs to the orthopoxvirus OPG079 family. Homoomultimer (Potential). Interacts with the small subunit of ribonucleotide reductase. Interacts with host FAM111A; this interaction protomtes OPG079 degradation through autophagy.

It localises to the host cytoplasm. Its function is as follows. Plays an essential role in viral DNA replication. Binds to ssDNA with high affinity and localizes to cytoplasmic factories where nascent viral genomes accumulate. May disrupt loops, hairpins and other secondary structures present on ssDNA to reduce and eliminate pausing of viral DNA polymerase at specific sites during elongation. The chain is Truncated protein OPG079 (OPG079) from Vaccinia virus (strain L-IVP) (VACV).